The primary structure comprises 84 residues: Large ribosomal subunit protein bL27 (84 aa).

A disordered region spans residues 1–21 (MAHKKGAGSTKNGRDSKPKML).

The protein belongs to the bacterial ribosomal protein bL27 family.

The polypeptide is Large ribosomal subunit protein bL27 (Dehalococcoides mccartyi (strain ATCC BAA-2100 / JCM 16839 / KCTC 5957 / BAV1)).